We begin with the raw amino-acid sequence, 797 residues long: MGFIYARKLLLCMAVSIYAIGSTTTTETTTSSSSTSGSGQSTSSGTTNSSSSPTTSPPTTSSSPPTSTHTSSPSSTSTQSSSTAATSSSAPSTASSTTSIPTSTSTETTTTTPTASTTTPTTTTAAPTTAATTTAVTTAASTSAETTTATATATSTPTTTTPTSTTTTTATTTVPTTASTTTDTTTAATTTAATTTAATTTAATTTAATTTAATTTAATTTAATTSSATTAATTTAATTTAATTTAATTTAATTTAATTTGSPTSGSTSTTGASTSTPSASTATSATPTSTSTSAAATTSTPTPTSAATSAESTTEAPTSTPTTDTTTPSEATTATTSPESTTVSASTTSATTTAFTTESHTSPDSSTGSTSTAEPSSTFTLTPSTATPSTDQFTGSSASTESDSTDSSTVPTTGTESITESSSTTEASTNLGSSTYESTEALETPDGNTTSGNTTPSPSPRTPSFADTQQTPDNGVSTQHTTINDHTTANAQKHAGHHRGRAGGRRGSPQGGSHTTPHPDRLTPSPDDTYDDDTNHPNGRNNSIEIVPQLPPDRPIIELGVATLRKNFMEASCTVETNSGLAIFWKIGNASVDAFNRGTTHTRLMRNGVPVYALVSTLRVPWLNVIPLTKITCAACPTNLVAGDGVDLNSCTTKSTTIPCPGQQRTHIFFSAKGDRAVCITSELVSQPTITWSVGSDRLRNDGFSQTWYGIQPGVCGILRSEVRIHRTTWRFGSTSKDYLCEVSASDSKTSDYKVLPNAHSTSNFALVAATTLTVTILCLLCCLYCMLTRPRASVY.

The N-terminal stretch at 1-25 (MGFIYARKLLLCMAVSIYAIGSTTT) is a signal peptide. Disordered regions lie at residues 24-188 (TTTE…TTAA) and 212-549 (AATT…EIVP). Residues 212 to 373 (AATTTAATTT…PDSSTGSTST (162 aa)) are compositionally biased toward low complexity. A compositionally biased stretch (polar residues) spans 374–394 (AEPSSTFTLTPSTATPSTDQF). Composition is skewed to low complexity over residues 395–430 (TGSSASTESDSTDSSTVPTTGTESITESSSTTEAST) and 445–457 (TPDGNTTSGNTTP). Residues 466 to 492 (FADTQQTPDNGVSTQHTTINDHTTANA) show a composition bias toward polar residues. A compositionally biased stretch (basic residues) spans 495-505 (HAGHHRGRAGG). An N-linked (GlcNAc...) asparagine; by host glycan is attached at Asn-590. A helical membrane pass occupies residues 766–790 (FALVAATTLTVTILCLLCCLYCMLT).

The protein resides in the virion membrane. Its function is as follows. Virulence factor. The protein is Glycoprotein gp2 (EUs4) of Equine herpesvirus 1 (strain Ab4p) (EHV-1).